The primary structure comprises 261 residues: Hydroxyethylthiazole kinase (261 aa).

Substrate is bound at residue methionine 39. Residues arginine 115 and threonine 159 each coordinate ATP. Residue glycine 186 coordinates substrate.

This sequence belongs to the Thz kinase family. Mg(2+) is required as a cofactor.

The catalysed reaction is 5-(2-hydroxyethyl)-4-methylthiazole + ATP = 4-methyl-5-(2-phosphooxyethyl)-thiazole + ADP + H(+). It participates in cofactor biosynthesis; thiamine diphosphate biosynthesis; 4-methyl-5-(2-phosphoethyl)-thiazole from 5-(2-hydroxyethyl)-4-methylthiazole: step 1/1. In terms of biological role, catalyzes the phosphorylation of the hydroxyl group of 4-methyl-5-beta-hydroxyethylthiazole (THZ). This Macrococcus caseolyticus (strain JCSC5402) (Macrococcoides caseolyticum) protein is Hydroxyethylthiazole kinase.